The primary structure comprises 326 residues: Probable cell division protein WhiA (326 aa).

The H-T-H motif DNA-binding region spans 275–308 (SLDELGHHADPPMTKDAVAGRIRRLLAMADKKAV).

The protein belongs to the WhiA family.

In terms of biological role, involved in cell division and chromosome segregation. The sequence is that of Probable cell division protein WhiA from Clavibacter michiganensis subsp. michiganensis (strain NCPPB 382).